We begin with the raw amino-acid sequence, 426 residues long: Serine--tRNA ligase (426 aa).

Thr233–Glu235 is a binding site for L-serine. An ATP-binding site is contributed by Arg264–Glu266. L-serine is bound at residue Glu287. Glu351–Ser354 contributes to the ATP binding site. Residue Ser387 coordinates L-serine.

The protein belongs to the class-II aminoacyl-tRNA synthetase family. Type-1 seryl-tRNA synthetase subfamily. As to quaternary structure, homodimer. The tRNA molecule binds across the dimer.

It localises to the cytoplasm. It catalyses the reaction tRNA(Ser) + L-serine + ATP = L-seryl-tRNA(Ser) + AMP + diphosphate + H(+). The catalysed reaction is tRNA(Sec) + L-serine + ATP = L-seryl-tRNA(Sec) + AMP + diphosphate + H(+). Its pathway is aminoacyl-tRNA biosynthesis; selenocysteinyl-tRNA(Sec) biosynthesis; L-seryl-tRNA(Sec) from L-serine and tRNA(Sec): step 1/1. In terms of biological role, catalyzes the attachment of serine to tRNA(Ser). Is also able to aminoacylate tRNA(Sec) with serine, to form the misacylated tRNA L-seryl-tRNA(Sec), which will be further converted into selenocysteinyl-tRNA(Sec). The chain is Serine--tRNA ligase from Pseudomonas fluorescens (strain Pf0-1).